Consider the following 443-residue polypeptide: Thymidine phosphorylase (443 aa).

The protein belongs to the thymidine/pyrimidine-nucleoside phosphorylase family. In terms of assembly, homodimer.

The enzyme catalyses thymidine + phosphate = 2-deoxy-alpha-D-ribose 1-phosphate + thymine. It participates in pyrimidine metabolism; dTMP biosynthesis via salvage pathway; dTMP from thymine: step 1/2. Functionally, the enzymes which catalyze the reversible phosphorolysis of pyrimidine nucleosides are involved in the degradation of these compounds and in their utilization as carbon and energy sources, or in the rescue of pyrimidine bases for nucleotide synthesis. The chain is Thymidine phosphorylase from Shewanella amazonensis (strain ATCC BAA-1098 / SB2B).